Consider the following 267-residue polypeptide: 3-methyl-2-oxobutanoate hydroxymethyltransferase (267 aa).

Mg(2+) is bound by residues aspartate 45 and aspartate 84. 3-methyl-2-oxobutanoate is bound by residues 45–46 (DS), aspartate 84, and lysine 113. Glutamate 115 contacts Mg(2+). Glutamate 182 functions as the Proton acceptor in the catalytic mechanism.

Belongs to the PanB family. As to quaternary structure, homodecamer; pentamer of dimers. Mg(2+) is required as a cofactor.

The protein localises to the cytoplasm. The enzyme catalyses 3-methyl-2-oxobutanoate + (6R)-5,10-methylene-5,6,7,8-tetrahydrofolate + H2O = 2-dehydropantoate + (6S)-5,6,7,8-tetrahydrofolate. Its pathway is cofactor biosynthesis; coenzyme A biosynthesis. Functionally, catalyzes the reversible reaction in which hydroxymethyl group from 5,10-methylenetetrahydrofolate is transferred onto alpha-ketoisovalerate to form ketopantoate. The sequence is that of 3-methyl-2-oxobutanoate hydroxymethyltransferase from Saccharolobus islandicus (strain L.S.2.15 / Lassen #1) (Sulfolobus islandicus).